Consider the following 225-residue polypeptide: Protein ZW2 (225 aa).

A DOG1 domain is found at 7 to 225 (SETFASFFND…FYLRLRDLGV (219 aa)).

In terms of biological role, may be involved in the regulation of abscisic acid (ABA) sensitivity. In Arabidopsis thaliana (Mouse-ear cress), this protein is Protein ZW2.